The following is a 262-amino-acid chain: Tryptophan synthase alpha chain (262 aa).

Catalysis depends on proton acceptor residues Glu-52 and Asp-63.

It belongs to the TrpA family. As to quaternary structure, tetramer of two alpha and two beta chains.

It catalyses the reaction (1S,2R)-1-C-(indol-3-yl)glycerol 3-phosphate + L-serine = D-glyceraldehyde 3-phosphate + L-tryptophan + H2O. Its pathway is amino-acid biosynthesis; L-tryptophan biosynthesis; L-tryptophan from chorismate: step 5/5. The alpha subunit is responsible for the aldol cleavage of indoleglycerol phosphate to indole and glyceraldehyde 3-phosphate. The sequence is that of Tryptophan synthase alpha chain from Mycobacteroides abscessus (strain ATCC 19977 / DSM 44196 / CCUG 20993 / CIP 104536 / JCM 13569 / NCTC 13031 / TMC 1543 / L948) (Mycobacterium abscessus).